The sequence spans 316 residues: Zinc finger protein 330 (316 aa).

The disordered stretch occupies residues 1-24 (MPKKKTGARKKAENRREREKQLRA). Residues 3–11 (KKKTGARKK) carry the Nuclear localization signal motif. The span at 10–22 (KKAENRREREKQL) shows a compositional bias: basic and acidic residues. C4-type zinc fingers lie at residues 42–58 (CDKC…CYFC), 67–104 (CAQC…CDFC), 129–149 (CVEC…CSFC), and 175–189 (CVSC…CLRC). The disordered stretch occupies residues 227-299 (SMSTRSLKFG…ESSDLFNNLN (73 aa)). The segment covering 268–291 (DDDEEEDEAEDEEEEDGKDSDAES) has biased composition (acidic residues). A Phosphoserine modification is found at serine 287.

This sequence belongs to the NOA36 family.

The protein resides in the nucleus. Its subcellular location is the nucleolus. It localises to the chromosome. It is found in the centromere. The sequence is that of Zinc finger protein 330 (Znf330) from Mus musculus (Mouse).